The sequence spans 119 residues: DNA-binding protein inhibitor ID-3 (119 aa).

A bHLH domain is found at arginine 28–leucine 80.

As to quaternary structure, homodimer, and heterodimer with other HLH proteins. Interacts with COPS5 and COPS7A. Interacts with IFI204. Interacts with GATA4 and NKX2-5. Interacts with ANKRD2; both proteins cooperate in myoblast differentiation. Interacts with CLOCK and BMAL1.

The protein resides in the nucleus. Transcriptional regulator (lacking a basic DNA binding domain) which negatively regulates the basic helix-loop-helix (bHLH) transcription factors by forming heterodimers and inhibiting their DNA binding and transcriptional activity. Implicated in regulating a variety of cellular processes, including cellular growth, senescence, differentiation, apoptosis, angiogenesis, and neoplastic transformation. Involved in myogenesis by inhibiting skeletal muscle and cardiac myocyte differentiation and promoting muscle precursor cells proliferation. Inhibits the binding of E2A-containing protein complexes to muscle creatine kinase E-box enhancer. Regulates the circadian clock by repressing the transcriptional activator activity of the CLOCK-BMAL1 heterodimer. The protein is DNA-binding protein inhibitor ID-3 (ID3) of Bos taurus (Bovine).